The following is an 87-amino-acid chain: Small ribosomal subunit protein eS21 (87 aa).

Belongs to the eukaryotic ribosomal protein eS21 family. In terms of assembly, component of the small ribosomal subunit (SSU). Mature N.crassa ribosomes consist of a small (40S) and a large (60S) subunit. The 40S small subunit contains 1 molecule of ribosomal RNA (18S rRNA) and at least 32 different proteins. The large 60S subunit contains 3 rRNA molecules (26S, 5.8S and 5S rRNA) and at least 42 different proteins.

The protein localises to the cytoplasm. Functionally, component of the ribosome, a large ribonucleoprotein complex responsible for the synthesis of proteins in the cell. The small ribosomal subunit (SSU) binds messenger RNAs (mRNAs) and translates the encoded message by selecting cognate aminoacyl-transfer RNA (tRNA) molecules. The large subunit (LSU) contains the ribosomal catalytic site termed the peptidyl transferase center (PTC), which catalyzes the formation of peptide bonds, thereby polymerizing the amino acids delivered by tRNAs into a polypeptide chain. The nascent polypeptides leave the ribosome through a tunnel in the LSU and interact with protein factors that function in enzymatic processing, targeting, and the membrane insertion of nascent chains at the exit of the ribosomal tunnel. This chain is Small ribosomal subunit protein eS21 (crp-7), found in Neurospora crassa (strain ATCC 24698 / 74-OR23-1A / CBS 708.71 / DSM 1257 / FGSC 987).